The sequence spans 503 residues: 3-octaprenyl-4-hydroxybenzoate carboxy-lyase (503 aa).

A Mn(2+)-binding site is contributed by Asn176. Residues Ile179 to Arg181, Arg193 to Leu195, and Arg198 to Gly199 contribute to the prenylated FMN site. Glu242 contacts Mn(2+). Asp303 (proton donor) is an active-site residue.

It belongs to the UbiD family. As to quaternary structure, homohexamer. Prenylated FMN serves as cofactor. Requires Mn(2+) as cofactor.

The protein resides in the cell membrane. The enzyme catalyses a 4-hydroxy-3-(all-trans-polyprenyl)benzoate + H(+) = a 2-(all-trans-polyprenyl)phenol + CO2. It participates in cofactor biosynthesis; ubiquinone biosynthesis. Functionally, catalyzes the decarboxylation of 3-octaprenyl-4-hydroxy benzoate to 2-octaprenylphenol, an intermediate step in ubiquinone biosynthesis. This Ralstonia pickettii (strain 12J) protein is 3-octaprenyl-4-hydroxybenzoate carboxy-lyase.